Reading from the N-terminus, the 145-residue chain is D-aminoacyl-tRNA deacylase (145 aa).

The short motif at 137-138 (GP) is the Gly-cisPro motif, important for rejection of L-amino acids element.

The protein belongs to the DTD family. Homodimer.

The protein localises to the cytoplasm. The enzyme catalyses glycyl-tRNA(Ala) + H2O = tRNA(Ala) + glycine + H(+). It carries out the reaction a D-aminoacyl-tRNA + H2O = a tRNA + a D-alpha-amino acid + H(+). An aminoacyl-tRNA editing enzyme that deacylates mischarged D-aminoacyl-tRNAs. Also deacylates mischarged glycyl-tRNA(Ala), protecting cells against glycine mischarging by AlaRS. Acts via tRNA-based rather than protein-based catalysis; rejects L-amino acids rather than detecting D-amino acids in the active site. By recycling D-aminoacyl-tRNA to D-amino acids and free tRNA molecules, this enzyme counteracts the toxicity associated with the formation of D-aminoacyl-tRNA entities in vivo and helps enforce protein L-homochirality. This chain is D-aminoacyl-tRNA deacylase, found in Pelobacter propionicus (strain DSM 2379 / NBRC 103807 / OttBd1).